An 818-amino-acid chain; its full sequence is Response regulator SSK1 (818 aa).

One can recognise a Response regulatory domain in the interval 611-769 (NVLIVEDNPI…WLERKVMEWG (159 aa)). Aspartate 660 carries the post-translational modification 4-aspartylphosphate.

The protein belongs to the SSK1 family.

Its subcellular location is the cytoplasm. Two-domain response regulator protein in the two-component signal transduction system of the HOG1 pathway. Modulates stress response, melanin biosynthesis and virulence via its regulation of the phosphorylation of HOG1. The sequence is that of Response regulator SSK1 from Verticillium dahliae (strain VdLs.17 / ATCC MYA-4575 / FGSC 10137) (Verticillium wilt).